The chain runs to 236 residues: Small ribosomal subunit protein uS2c (236 aa).

The protein belongs to the universal ribosomal protein uS2 family.

It is found in the plastid. The protein resides in the chloroplast. This chain is Small ribosomal subunit protein uS2c (rps2), found in Crucihimalaya wallichii (Rock-cress).